Here is a 98-residue protein sequence, read N- to C-terminus: NADH-ubiquinone oxidoreductase chain 4L (98 aa).

Helical transmembrane passes span 1-21 (MTSINLNLTMAFSLALTGVLV), 28-48 (STLLCLEGMMLSLFILMALLI), and 59-79 (APLILLVFSACEAGVGLALLV).

The protein belongs to the complex I subunit 4L family. Core subunit of respiratory chain NADH dehydrogenase (Complex I) which is composed of 45 different subunits.

It localises to the mitochondrion inner membrane. It carries out the reaction a ubiquinone + NADH + 5 H(+)(in) = a ubiquinol + NAD(+) + 4 H(+)(out). Functionally, core subunit of the mitochondrial membrane respiratory chain NADH dehydrogenase (Complex I) which catalyzes electron transfer from NADH through the respiratory chain, using ubiquinone as an electron acceptor. Part of the enzyme membrane arm which is embedded in the lipid bilayer and involved in proton translocation. This is NADH-ubiquinone oxidoreductase chain 4L (MT-ND4L) from Dactylopsila trivirgata (Striped possum).